Here is a 299-residue protein sequence, read N- to C-terminus: tRNA dimethylallyltransferase (299 aa).

Position 13–20 (13–20 (GPTASGKT)) interacts with ATP. 15–20 (TASGKT) is a binding site for substrate. The segment at 38-41 (DSRQ) is interaction with substrate tRNA.

It belongs to the IPP transferase family. As to quaternary structure, monomer. Requires Mg(2+) as cofactor.

It carries out the reaction adenosine(37) in tRNA + dimethylallyl diphosphate = N(6)-dimethylallyladenosine(37) in tRNA + diphosphate. Catalyzes the transfer of a dimethylallyl group onto the adenine at position 37 in tRNAs that read codons beginning with uridine, leading to the formation of N6-(dimethylallyl)adenosine (i(6)A). This is tRNA dimethylallyltransferase from Prochlorococcus marinus (strain MIT 9515).